A 645-amino-acid chain; its full sequence is MSDKSDLKAELERKKQRLAQIREEKKRKEEERKKKEADMQQKKEPVQDDSDLDRKRRETEALLQSIGISPEPPLVQPLHFLTWDTCYFHYLVPTPMSPSSKSVSTPSEAGSQDSGDLGPLTRTLQWDTDPSVLQLQSDSELGRRLHKLGVSKVTQVDFLPREVVSYSKETQTPLATHQSEEDEEDEEMVESKVGQDSELENQDKKQEVKEAPPRELTEEEKQQILHSEEFLIFFDRTIRVIERALAEDSDIFFDYSGRELEEKDGDVQAGANLSFNRQFYDEHWSKHRVVTCMDWSLQYPELMVASYNNNEDAPHEPDGVALVWNMKFKKTTPEYVFHCQSSVMSVCFARFHPNLVVGGTYSGQIVLWDNRSHRRTPVQRTPLSAAAHTHPVYCVNVVGTQNAHNLITVSTDGKMCSWSLDMLSTPQESMELVYNKSKPVAVTGMAFPTGDVNNFVVGSEEGTVYTACRHGSKAGIGEVFEGHQGPVTGINCHMAVGPIDFSHLFVTSSFDWTVKLWTTKHNKPLYSFEDNADYVYDVMWSPVHPALFACVDGMGRLDLWNLNNDTEVPTASVAIEGASALNRVRWAQAGKEVAVGDSEGRIWVYDVGELAVPHNDEWTRFARTLVEIRANRADSEEEGTVELSA.

Composition is skewed to basic and acidic residues over residues 1–13 and 20–58; these read MSDKSDLKAELER and QIREEKKRKEEERKKKEADMQQKKEPVQDDSDLDRKRRE. Disordered regions lie at residues 1 to 58 and 96 to 125; these read MSDK…KRRE and MSPSSKSVSTPSEAGSQDSGDLGPLTRTLQ. Ser-2 carries the post-translational modification N-acetylserine. Residues 2–123 are interaction with DCTN1; sequence SDKSDLKAEL…SGDLGPLTRT (122 aa). A phosphoserine mark is found at Ser-50 and Ser-100. Low complexity predominate over residues 96-107; the sequence is MSPSSKSVSTPS. At Thr-105 the chain carries Phosphothreonine. Ser-107, Ser-111, and Ser-114 each carry phosphoserine. Residues 147–163 form an interaction with DYNLT1 region; the sequence is KLGVSKVTQVDFLPREV. The segment at 169–221 is disordered; the sequence is ETQTPLATHQSEEDEEDEEMVESKVGQDSELENQDKKQEVKEAPPRELTEEEK. Thr-176 carries the post-translational modification Phosphothreonine. Residues Ser-179 and Ser-197 each carry the phosphoserine modification. Residues 189–221 show a composition bias toward basic and acidic residues; it reads VESKVGQDSELENQDKKQEVKEAPPRELTEEEK. WD repeat units lie at residues 285 to 334, 338 to 378, 387 to 428, 437 to 477, 482 to 527, 530 to 570, and 576 to 615; these read SKHR…TTPE, HCQS…RTPV, AHTH…TPQE, SKPV…AGIG, GHQG…PLYS, DNAD…EVPT, and EGASALNRVRWAQAGKEVAVGDSEGRIWVYDVGELAVPHN. A Phosphoserine modification is found at Ser-635.

Belongs to the dynein intermediate chain family. As to quaternary structure, homodimer. The cytoplasmic dynein 1 complex consists of two catalytic heavy chains (HCs) and a number of non-catalytic subunits presented by intermediate chains (ICs), light intermediate chains (LICs) and light chains (LCs); the composition seems to vary in respect to the IC, LIC and LC composition. The heavy chain homodimer serves as a scaffold for the probable homodimeric assembly of the respective non-catalytic subunits. The ICs and LICs bind directly to the HC dimer and the LCs assemble on the IC dimer. Interacts with DYNC1H1. Interacts with DYNLT1 and DYNLT3. Interacts with DCTN1. Interacts with MCRS1; the interaction is required for the proper distribution of centriolar satellites.

The protein localises to the cytoplasm. Its subcellular location is the chromosome. It is found in the centromere. It localises to the kinetochore. The protein resides in the cytoskeleton. The protein localises to the spindle pole. Acts as one of several non-catalytic accessory components of the cytoplasmic dynein 1 complex that are thought to be involved in linking dynein to cargos and to adapter proteins that regulate dynein function. Cytoplasmic dynein 1 acts as a motor for the intracellular retrograde motility of vesicles and organelles along microtubules. The intermediate chains mediate the binding of dynein to dynactin via its 150 kDa component (p150-glued) DCTN1. May play a role in mediating the interaction of cytoplasmic dynein with membranous organelles and kinetochores. This chain is Cytoplasmic dynein 1 intermediate chain 1 (DYNC1I1), found in Homo sapiens (Human).